We begin with the raw amino-acid sequence, 241 residues long: Protein TraL (241 aa).

This sequence to plasmid R751 TraL.

The polypeptide is Protein TraL (traL) (Escherichia coli).